Here is a 224-residue protein sequence, read N- to C-terminus: 7-cyano-7-deazaguanine synthase (224 aa).

Residue Leu7 to Leu17 participates in ATP binding. 4 residues coordinate Zn(2+): Cys191, Cys199, Cys202, and Cys205.

It belongs to the QueC family. Requires Zn(2+) as cofactor.

The catalysed reaction is 7-carboxy-7-deazaguanine + NH4(+) + ATP = 7-cyano-7-deazaguanine + ADP + phosphate + H2O + H(+). It participates in purine metabolism; 7-cyano-7-deazaguanine biosynthesis. Functionally, catalyzes the ATP-dependent conversion of 7-carboxy-7-deazaguanine (CDG) to 7-cyano-7-deazaguanine (preQ(0)). This is 7-cyano-7-deazaguanine synthase from Nostoc punctiforme (strain ATCC 29133 / PCC 73102).